The sequence spans 75 residues: Defense protein 6 (75 aa).

Positions 1 to 20 (MKTCLVFAFFLVAVFAAVQA) are cleaved as a signal peptide. Positions 21 to 32 (EENDSPQTLPRR) are excised as a propeptide. Intrachain disulfides connect C44–C63, C49–C68, and C53–C70.

Belongs to the invertebrate defensin family.

Its subcellular location is the secreted. In terms of biological role, has antibacterial activity. In Lonomia obliqua (Moth), this protein is Defense protein 6.